We begin with the raw amino-acid sequence, 676 residues long: Beta-galactosidase BgaP (676 aa).

Arg-112 contacts substrate. Cys-116 is a binding site for Zn(2+). Asn-150 contributes to the substrate binding site. The active-site Proton donor is Glu-151. Positions 156, 158, and 161 each coordinate Zn(2+). Glu-308 functions as the Nucleophile in the catalytic mechanism. Substrate contacts are provided by residues Trp-316 and 356-359; that span reads EKYH.

This sequence belongs to the glycosyl hydrolase 42 family. In terms of assembly, homodimer.

It catalyses the reaction Hydrolysis of terminal non-reducing beta-D-galactose residues in beta-D-galactosides.. With respect to regulation, no activity lost during treatment with 100 mM EDTA after 2 hours, and the addition of 1 mM MgCl(2), 1 mM CaCl(2) or 1 mM MnCl(2) has no effect. However, the enzyme activity is inhibited by Zn(2+), Cu(2+), Ni(2+) and Co(2+) to different extents. Addition of Na(+) or K(+) slightly stimulates the enzyme activity at low concentrations and the optimal concentration is 250 mM. A further increase of their concentration of ions above the optimum value results in a decrease in enzyme activity. The enzyme is still active even in the presence of Na(+) or K(+) at a concentration up to 5 M. Hydrolyzes lactose, o-nitrophenyl-beta-D-galactopyranoside (ONPG), p-nitrophenyl-beta-D-galactopyranoside (PNPG), 5-bromo-4-chloro-3-indolyl-beta-D-galactopyranoside (X-gal), o-nitrophenyl-beta-D-fucopyranoside, p-nitrophenyl-beta-D-mannoside, o-nitrophenyl-beta-D-glucoside, p-nitrophenyl-beta-D-xyloside, p-nitrophenyl-beta-D-cellobioside, p-nitrophenyl-beta-D-arabinoside, p-nitrophenyl-beta-D-lactoside, p-nitrophenyl-beta-D-galacturonide, p-nitrophenyl-beta-D-glucuronide and p-nitrophenyl-alpha-D-galactoside with highest level of activity with ONPG as substrate, intermediate level of activity with PNPG and lower levels of activity with all other chromogenic nitrophenyl analogs. Able to hydrolyze 34% of milk lactose after 60 minutes at 5 degrees Celsius. The polypeptide is Beta-galactosidase BgaP (Planococcus sp. (strain L4)).